The chain runs to 379 residues: Sialidase-2 (379 aa).

The FRIP motif signature appears at 20–23 (YRIP). Substrate is bound by residues R21 and R41. D46 (proton acceptor) is an active-site residue. A BNR 1 repeat occupies 127-138 (VTSTDYGMNWSP). Substrate contacts are provided by Y179 and Y181. Residues 197–208 (FISLDHGHTWEL) form a BNR 2 repeat. Residues E218, R237, and R303 each coordinate substrate. Residue Y333 is the Nucleophile of the active site. E354 is a catalytic residue.

This sequence belongs to the glycosyl hydrolase 33 family. In terms of tissue distribution, detected in skeletal muscle.

The protein resides in the cytoplasm. It localises to the cytosol. It carries out the reaction Hydrolysis of alpha-(2-&gt;3)-, alpha-(2-&gt;6)-, alpha-(2-&gt;8)- glycosidic linkages of terminal sialic acid residues in oligosaccharides, glycoproteins, glycolipids, colominic acid and synthetic substrates.. The enzyme catalyses a ganglioside GD1a + H2O = a ganglioside GM1 + N-acetylneuraminate. It catalyses the reaction a ganglioside GM1 + H2O = a ganglioside GA1 + N-acetylneuraminate. The catalysed reaction is a ganglioside GT1b + H2O = a ganglioside GD1b + N-acetylneuraminate. It carries out the reaction a ganglioside GD1b + H2O = a ganglioside GM1 + N-acetylneuraminate. The enzyme catalyses a ganglioside GD3 + H2O = a ganglioside GM3 + N-acetylneuraminate. It catalyses the reaction a ganglioside GM3 + H2O = a beta-D-galactosyl-(1-&gt;4)-beta-D-glucosyl-(1&lt;-&gt;1)-ceramide + N-acetylneuraminate. The catalysed reaction is a ganglioside GM2 + H2O = a ganglioside GA2 + N-acetylneuraminate. It carries out the reaction a neolactoside IV(3)-alpha-NeuAc-nLc4Cer(d18:1(4E)) + H2O = a neolactoside nLc4Cer(d18:1(4E)) + N-acetylneuraminate. The enzyme catalyses N-acetyl-alpha-neuraminosyl-(2-&gt;3)-beta-D-galactosyl-(1-&gt;4)-D-glucose + H2O = lactose + N-acetylneuraminate. Its function is as follows. Exo-alpha-sialidase that catalyzes the hydrolytic cleavage of the terminal sialic acid (N-acetylneuraminic acid, Neu5Ac) of a glycan moiety in the catabolism of glycolipids, glycoproteins and oligosacharides. Recognizes sialyl linkage positions of the glycan moiety as well as the supramolecular organization of the sialoglycoconjugate. Displays preference for alpha-(2-&gt;3)-sialylated GD1a and GT1B gangliosides over alpha-(2-&gt;8)-sialylated GD1b, in both monomeric forms and micelles. Hydrolyzes monomeric GM1 ganglioside, but has no activity toward the miscellar form. Has lower sialidase activity for glycoproteins such as fetuin and TF/transferrin that carry a mixture of alpha-(2-&gt;3) and alpha-(2-&gt;6)-sialyl linkages. Cleaves milk oligosaccharide alpha-(2-&gt;3)-sialyllactose, but is inactive toward alpha-(2-&gt;6)-sialyllactose isomer. Has no activity toward colominic acid, a homomer of alpha-(2-&gt;8)-linked Neu5Ac residues. The chain is Sialidase-2 (Neu2) from Rattus norvegicus (Rat).